The chain runs to 288 residues: MTYQQDNDKLYRYLFQNRAVRGEWVRMNKSFSETLNTHHYPIAVQNLLGEMMVATGLLTATLKFTGHITVQIQGDGPLKLALVNGTDSQQIRALARLQGEISDDMTLHQMIGKGVLVITIAPEEGERYQGVVTLDKPTITECLEEYFERSEQLKTQLIIRTGEFNGEPVAAGMLLQVMPDGSGSPDDFEHLAALTATVKDDEIFGLTAEEMLYRLYHEEQVEIYAPQAVTFHCGCSAERSGAALLLISDAELDEILAEHNGSIDMQCECCGTHYFFNRDAIDKLKMQQ.

2 disulfide bridges follow: Cys-233/Cys-235 and Cys-267/Cys-270.

It belongs to the HSP33 family. Post-translationally, under oxidizing conditions two disulfide bonds are formed involving the reactive cysteines. Under reducing conditions zinc is bound to the reactive cysteines and the protein is inactive.

The protein localises to the cytoplasm. In terms of biological role, redox regulated molecular chaperone. Protects both thermally unfolding and oxidatively damaged proteins from irreversible aggregation. Plays an important role in the bacterial defense system toward oxidative stress. The protein is 33 kDa chaperonin of Actinobacillus succinogenes (strain ATCC 55618 / DSM 22257 / CCUG 43843 / 130Z).